The primary structure comprises 1397 residues: DNA-directed RNA polymerase subunit beta' (1397 aa).

Zn(2+) contacts are provided by Cys75, Cys77, Cys90, and Cys93. Positions 465, 467, and 469 each coordinate Mg(2+). Zn(2+) contacts are provided by Cys819, Cys893, Cys900, and Cys903.

It belongs to the RNA polymerase beta' chain family. The RNAP catalytic core consists of 2 alpha, 1 beta, 1 beta' and 1 omega subunit. When a sigma factor is associated with the core the holoenzyme is formed, which can initiate transcription. Mg(2+) is required as a cofactor. Requires Zn(2+) as cofactor.

The catalysed reaction is RNA(n) + a ribonucleoside 5'-triphosphate = RNA(n+1) + diphosphate. Its function is as follows. DNA-dependent RNA polymerase catalyzes the transcription of DNA into RNA using the four ribonucleoside triphosphates as substrates. This Acinetobacter baylyi (strain ATCC 33305 / BD413 / ADP1) protein is DNA-directed RNA polymerase subunit beta'.